Here is a 280-residue protein sequence, read N- to C-terminus: Shikimate dehydrogenase (NADP(+)) (280 aa).

Shikimate-binding positions include 15-17 and threonine 62; that span reads SLS. The active-site Proton acceptor is the lysine 66. Residues asparagine 88 and aspartate 104 each contribute to the shikimate site. Residues 128–132, 151–156, and isoleucine 222 each bind NADP(+); these read GAGGA and NRTEER. Tyrosine 224 contacts shikimate. Position 245 (glycine 245) interacts with NADP(+).

The protein belongs to the shikimate dehydrogenase family. Homodimer.

It catalyses the reaction shikimate + NADP(+) = 3-dehydroshikimate + NADPH + H(+). It functions in the pathway metabolic intermediate biosynthesis; chorismate biosynthesis; chorismate from D-erythrose 4-phosphate and phosphoenolpyruvate: step 4/7. Functionally, involved in the biosynthesis of the chorismate, which leads to the biosynthesis of aromatic amino acids. Catalyzes the reversible NADPH linked reduction of 3-dehydroshikimate (DHSA) to yield shikimate (SA). The sequence is that of Shikimate dehydrogenase (NADP(+)) from Methanosarcina mazei (strain ATCC BAA-159 / DSM 3647 / Goe1 / Go1 / JCM 11833 / OCM 88) (Methanosarcina frisia).